Consider the following 519-residue polypeptide: MIIGLSDAFALGGIALSFLVAYQFIYFYFIYSPRAKKLGCAPPVIVFSFPLGLPALYKFATAMLHDNLLEYISIRIADMKVRTGFQTLAGQRWLVTLEPENIKTVLATSFKDYSLGFRYDIMYGLLGNGIFTLSGDGWKHSRALLRPQFSREQVSHLESMRTHINLMINNHFKGGQVVDAQALYHNLTIDTATEFLFGESTNTLDPDLAQQGLPGPKGLVTGEQFAEAFTSALEILSVRVIVGAAWFLIWTPKFWRSCKVCHNFIDYFVYKALATPMEKDQEADRYVFIRELTKETSDPRVIRDQALNILLAGRDTTAGLLSFITYYLGAYPEVYAELREAVLSEFGSTDVETPTFEQLKQCKVLQNVIREVLRLHPNVPLNFRQAIVDTKLPTGGGPNGDQPVFVPKGQNVFYSTYSMQRRTDIWGPDATTFRPDRWNEPREALASGWDYIPFNGGPRICLGQQFALTEASYTIVRICQEFSRIEVLHPDVITSKNSMKQRMRLTQTASGGVITRFIR.

2 helical membrane-spanning segments follow: residues 10-30 and 44-64; these read ALGGIALSFLVAYQFIYFYFI and VIVFSFPLGLPALYKFATAML. Residue cysteine 479 participates in heme binding.

Belongs to the cytochrome P450 family. Heme is required as a cofactor.

The protein localises to the membrane. Its function is as follows. Together with an NADPH cytochrome P450 the enzyme system catalyzes the terminal hydroxylation as the first step in the assimilation of alkanes and fatty acids. This Candida apicola (Yeast) protein is Cytochrome P450 52E1 (CYP52E1).